The sequence spans 387 residues: Gamma-butyrobetaine dioxygenase (387 aa).

Zn(2+)-binding residues include cysteine 38, cysteine 40, cysteine 43, and histidine 82. Fe cation-binding residues include histidine 202, aspartate 204, and histidine 347. At serine 351 the chain carries Phosphoserine.

Belongs to the gamma-BBH/TMLD family. It depends on Fe(2+) as a cofactor. L-ascorbate is required as a cofactor.

It is found in the cytoplasm. It carries out the reaction 4-(trimethylamino)butanoate + 2-oxoglutarate + O2 = carnitine + succinate + CO2. Its pathway is amine and polyamine biosynthesis; carnitine biosynthesis. Functionally, catalyzes the formation of L-carnitine from gamma-butyrobetaine. The sequence is that of Gamma-butyrobetaine dioxygenase (Bbox1) from Mus musculus (Mouse).